Reading from the N-terminus, the 187-residue chain is Biphenyl 2,3-dioxygenase subunit beta (187 aa).

This sequence belongs to the bacterial ring-hydroxylating dioxygenase beta subunit family. In terms of assembly, heterohexamer consisting of three BphA1 subunits and three BphA2 subunits. The multicomponent biphenyl dioxygenase system is composed of a ferredoxin reductase (BphA4), a ferredoxin (BphA3), and a terminal oxygenase (BphA1A2).

The enzyme catalyses biphenyl + NADH + O2 + H(+) = (2R,3S)-3-phenylcyclohexa-3,5-diene-1,2-diol + NAD(+). It participates in xenobiotic degradation; biphenyl degradation; 2-hydroxy-2,4-pentadienoate and benzoate from biphenyl: step 1/4. In terms of biological role, part of the oxygenase component of the biphenyl dioxygenase system that catalyzes the stereospecific dihydroxylation of the aromatic ring of biphenyl, yielding a dihydrodiol compound. Is likely involved in biphenyl degradation that allows growth of Rhodococcus sp. strain RHA1 on biphenyl as the sole source of carbon and energy. Can also use naphtalene and 4-chlorobiphenyl (4-CB) as substrates, as well as some polychlorinated biphenyls (PCB) such as 2,2'-dichlorobiphenyl, 2,3-dichlorobiphenyl and 2,5,2'-trichlorobiphenyl. Exhibits weak activity toward dibenzofuran and dibenzo-p-dioxin. Electrons are transferred from NADH to the [2Fe-2S] cluster in BphA1 via FAD of BphA4 and [2Fe-2S] cluster of BphA3. This chain is Biphenyl 2,3-dioxygenase subunit beta, found in Rhodococcus jostii (strain RHA1).